A 406-amino-acid chain; its full sequence is Glutamyl-tRNA reductase (406 aa).

Substrate is bound by residues 51–54 (TCNR), Ser101, 106–108 (ESE), and Gln112. The active-site Nucleophile is the Cys52. An NADP(+)-binding site is contributed by 180 to 185 (GAGSIG).

Belongs to the glutamyl-tRNA reductase family. In terms of assembly, homodimer.

The catalysed reaction is (S)-4-amino-5-oxopentanoate + tRNA(Glu) + NADP(+) = L-glutamyl-tRNA(Glu) + NADPH + H(+). It participates in porphyrin-containing compound metabolism; protoporphyrin-IX biosynthesis; 5-aminolevulinate from L-glutamyl-tRNA(Glu): step 1/2. In terms of biological role, catalyzes the NADPH-dependent reduction of glutamyl-tRNA(Glu) to glutamate 1-semialdehyde (GSA). The polypeptide is Glutamyl-tRNA reductase (Caldivirga maquilingensis (strain ATCC 700844 / DSM 13496 / JCM 10307 / IC-167)).